The sequence spans 567 residues: Oxygen-dependent choline dehydrogenase (567 aa).

An FAD-binding site is contributed by Asp4–Glu33. Residue His473 is the Proton acceptor of the active site.

This sequence belongs to the GMC oxidoreductase family. Requires FAD as cofactor.

It catalyses the reaction choline + A = betaine aldehyde + AH2. It carries out the reaction betaine aldehyde + NAD(+) + H2O = glycine betaine + NADH + 2 H(+). It functions in the pathway amine and polyamine biosynthesis; betaine biosynthesis via choline pathway; betaine aldehyde from choline (cytochrome c reductase route): step 1/1. Its function is as follows. Involved in the biosynthesis of the osmoprotectant glycine betaine. Catalyzes the oxidation of choline to betaine aldehyde and betaine aldehyde to glycine betaine at the same rate. The polypeptide is Oxygen-dependent choline dehydrogenase (Yersinia pseudotuberculosis serotype IB (strain PB1/+)).